The sequence spans 125 residues: uncharacterized protein (125 aa).

A signal peptide spans 1-21; the sequence is MIRNIIITISAILLLTSKGFA. Positions 54-102 form a coiled coil; sequence KPEIREEIQKYRVEIVNINKKKRELYDKLSKEAQNFLAKEQEYKQRLSS. The tract at residues 96 to 125 is disordered; sequence YKQRLSSSSMATEDSKDNNTAKDNKDADKK. Over residues 108-125 the composition is skewed to basic and acidic residues; it reads EDSKDNNTAKDNKDADKK.

This is an uncharacterized protein from Rickettsia bellii (strain RML369-C).